Consider the following 390-residue polypeptide: MKFIDESLIRIEAGDGGNGCVSFRREKFIPKGGPDGGDGGDGGDVYLQADENLNTLIDYRFNKRFAAERGENGRSSDCTGRRGKDIILPVPVGTRAIDNDTKETLGDLTQHGQKMLVAKGGYHGLGNTRFKSSVNRAPRQKTMGTPGEKRDLLLELMLLADVGMLGLPNAGKSTFIRAVSAAKPKVADYPFTTLVPSLGVVKVDDSHSFVVADIPGLIEGAADGAGLGIRFLKHLERCRVLIHLVDIAPIDGSNPADNMAIIESELFQYSEKLSEKPRWLVFNKIDTMSDEEAEERAREIAEQLGWEEDYYFISAATGKNVSPLCRDIMDFIIANPREAETQQVAPEEVKFKWEDYHQERLAEHQFDDDEDWDDDWSEEDDEGIEFIYKP.

Residues 1–159 (MKFIDESLIR…RDLLLELMLL (159 aa)) form the Obg domain. The region spanning 160–333 (ADVGMLGLPN…LCRDIMDFII (174 aa)) is the OBG-type G domain. Residues 166 to 173 (GLPNAGKS), 191 to 195 (FTTLV), 213 to 216 (DIPG), 283 to 286 (NKID), and 314 to 316 (SAA) contribute to the GTP site. Mg(2+)-binding residues include S173 and T193. Residues 363–382 (EHQFDDDEDWDDDWSEEDDE) form a disordered region. The segment covering 366–382 (FDDDEDWDDDWSEEDDE) has biased composition (acidic residues).

It belongs to the TRAFAC class OBG-HflX-like GTPase superfamily. OBG GTPase family. In terms of assembly, monomer. Mg(2+) is required as a cofactor.

Its subcellular location is the cytoplasm. An essential GTPase which binds GTP, GDP and possibly (p)ppGpp with moderate affinity, with high nucleotide exchange rates and a fairly low GTP hydrolysis rate. Plays a role in control of the cell cycle, stress response, ribosome biogenesis and in those bacteria that undergo differentiation, in morphogenesis control. This is GTPase Obg from Haemophilus influenzae (strain ATCC 51907 / DSM 11121 / KW20 / Rd).